The sequence spans 311 residues: Ribosomal protein L11 methyltransferase (311 aa).

S-adenosyl-L-methionine-binding residues include Thr162, Gly183, Asp205, and Asn248.

This sequence belongs to the methyltransferase superfamily. PrmA family.

It is found in the cytoplasm. It carries out the reaction L-lysyl-[protein] + 3 S-adenosyl-L-methionine = N(6),N(6),N(6)-trimethyl-L-lysyl-[protein] + 3 S-adenosyl-L-homocysteine + 3 H(+). Methylates ribosomal protein L11. This Bacillus subtilis (strain 168) protein is Ribosomal protein L11 methyltransferase.